The following is a 301-amino-acid chain: CRISPR-associated endonuclease Cas1 (301 aa).

Mn(2+)-binding residues include E133, H200, and D213.

It belongs to the CRISPR-associated endonuclease Cas1 family. In terms of assembly, homodimer, forms a heterotetramer with a Cas2 homodimer. It depends on Mg(2+) as a cofactor. Mn(2+) serves as cofactor.

In terms of biological role, CRISPR (clustered regularly interspaced short palindromic repeat), is an adaptive immune system that provides protection against mobile genetic elements (viruses, transposable elements and conjugative plasmids). CRISPR clusters contain spacers, sequences complementary to antecedent mobile elements, and target invading nucleic acids. CRISPR clusters are transcribed and processed into CRISPR RNA (crRNA). Acts as a dsDNA endonuclease. Involved in the integration of spacer DNA into the CRISPR cassette. This Clostridium sp. (strain SY8519) protein is CRISPR-associated endonuclease Cas1.